A 73-amino-acid polypeptide reads, in one-letter code: MKILGVTGFILICLLAISVLMDMLQGFSLTKAVYNNMSSFKMTTFAEWVVLLFFVLVLVREMYVIYKSKKKNP.

The N-terminal stretch at 1 to 22 (MKILGVTGFILICLLAISVLMD) is a signal peptide. Residues 44 to 66 (TFAEWVVLLFFVLVLVREMYVIY) form a helical membrane-spanning segment.

It localises to the membrane. This is an uncharacterized protein from Bacillus subtilis (strain 168).